Consider the following 435-residue polypeptide: MKPINVGLLGIGTVGGGTYTVLTRNQEGNRAPCRPPNCHHARRDRNLELARKVTGGQIDVTDDAFAVVVRPRHRHRGRIDRRIHHRARTGYEGDRERQARVAANKALMLAWQRDFRRVAQQKGVIVAFEAAVAGGIPIIKAVAAGAGRQPSSRVLRAIINGTTNFILSEMREKGLAFADVLKEAQPRLCEATRPSTSRAWTAHKLMILAAIGFGIPMQFDKAYVEGISKLDALDIRYAEELGYRQAAWHAPSAPARGVELARAPDPDPRETPDRQCQRRHNAVLVSDACRSHLVYRPDACRRHASAVVADIVDGTRTAYHRRAPAVPHLLSSPTSSWTCRFAIGEVSSAYYLRLRAVDKPGRDGHVTRILATGSLHRCDDSEGNRRQAERRRSGRHHHPDHVTVEKNMDDAIVAIEALPAISGSVTRLRMEELSR.

NADPH-binding residues include threonine 13, valine 14, arginine 43, and lysine 105. Valine 14 serves as a coordination point for NAD(+). The NADP(+) site is built by valine 14, arginine 43, and lysine 105. Na(+)-binding residues include glutamate 129, valine 132, glycine 134, and isoleucine 136. Lysine 204 functions as the Proton donor in the catalytic mechanism. 2 disordered regions span residues 255–274 and 377–402; these read ARGV…TPDR and RCDD…PDHV. 2 stretches are compositionally biased toward basic and acidic residues: residues 262 to 274 and 377 to 391; these read RAPD…TPDR and RCDD…AERR.

This sequence belongs to the homoserine dehydrogenase family. A metal cation is required as a cofactor.

It carries out the reaction L-homoserine + NADP(+) = L-aspartate 4-semialdehyde + NADPH + H(+). The catalysed reaction is L-homoserine + NAD(+) = L-aspartate 4-semialdehyde + NADH + H(+). The protein operates within amino-acid biosynthesis; L-methionine biosynthesis via de novo pathway; L-homoserine from L-aspartate: step 3/3. It functions in the pathway amino-acid biosynthesis; L-threonine biosynthesis; L-threonine from L-aspartate: step 3/5. Its function is as follows. Catalyzes the conversion of L-aspartate-beta-semialdehyde (L-Asa) to L-homoserine (L-Hse), the third step in the biosynthesis of threonine and methionine from aspartate. This chain is Homoserine dehydrogenase (hom), found in Methylobacillus glycogenes.